The following is a 310-amino-acid chain: HPr kinase/phosphorylase (310 aa).

Active-site residues include histidine 138 and lysine 159. 153 to 160 (GGSGVGKS) contacts ATP. Serine 160 contributes to the Mg(2+) binding site. Aspartate 177 serves as the catalytic Proton acceptor; for phosphorylation activity. Proton donor; for dephosphorylation activity. Positions 201 to 210 (LEIRGLGIIN) are important for the catalytic mechanism of both phosphorylation and dephosphorylation. Glutamate 202 lines the Mg(2+) pocket. Arginine 243 is an active-site residue. The important for the catalytic mechanism of dephosphorylation stretch occupies residues 264–269 (PVRPGR).

Belongs to the HPrK/P family. In terms of assembly, homohexamer. The cofactor is Mg(2+).

The catalysed reaction is [HPr protein]-L-serine + ATP = [HPr protein]-O-phospho-L-serine + ADP + H(+). It catalyses the reaction [HPr protein]-O-phospho-L-serine + phosphate + H(+) = [HPr protein]-L-serine + diphosphate. Functionally, catalyzes the ATP- as well as the pyrophosphate-dependent phosphorylation of a specific serine residue in HPr, a phosphocarrier protein of the phosphoenolpyruvate-dependent sugar phosphotransferase system (PTS). HprK/P also catalyzes the pyrophosphate-producing, inorganic phosphate-dependent dephosphorylation (phosphorolysis) of seryl-phosphorylated HPr (P-Ser-HPr). The two antagonistic activities of HprK/P are regulated by several intracellular metabolites, which change their concentration in response to the absence or presence of rapidly metabolisable carbon sources (glucose, fructose, etc.) in the growth medium. Also phosphorylates/dephosphorylates the HPr-like catabolite repression protein crh on a specific serine residue. Therefore, by controlling the phosphorylation state of HPr and crh, HPrK/P is a sensor enzyme that plays a major role in the regulation of carbon metabolism and sugar transport: it mediates carbon catabolite repression (CCR), and regulates PTS-catalyzed carbohydrate uptake and inducer exclusion. In Shouchella clausii (strain KSM-K16) (Alkalihalobacillus clausii), this protein is HPr kinase/phosphorylase.